The chain runs to 424 residues: Zygote arrest protein 1 (424 aa).

Disordered regions lie at residues 125–175 (RTLQ…PMRF) and 196–313 (GPGP…SPEL). Residues 141-150 (GAEGTTGGGS) are compositionally biased toward gly residues. Over residues 289–298 (RARDGGDGRE) the composition is skewed to basic and acidic residues. The 3CxxC-type zinc finger occupies 326-409 (KYGYYHCKDC…RQDLCGRCKG (84 aa)).

Belongs to the ZAR1 family. As to quaternary structure, interacts with YBX2. Ubiquitinated and degradaded by the proteasome during oocyte meiotic maturation, leading to MARDO (mitochondria-associated ribonucleoprotein domain) membraneless compartment dissolution. In terms of tissue distribution, ovary and testis.

The protein resides in the cytoplasm. It is found in the cytoplasmic ribonucleoprotein granule. Its function is as follows. mRNA-binding protein that mediates formation of MARDO (mitochondria-associated ribonucleoprotein domain), a membraneless compartment that stores maternal mRNAs in oocytes. MARDO assembly around mitochondria is directed by an increase in mitochondrial membrane potential during oocyte growth. Promotes formation of MARDO phase-separated membraneless compartment by undergoing liquid-liquid phase separation upon binding to maternal mRNAs. Binds to the 3'-UTR of maternal mRNAs. Maternal mRNAs stored in the MARDO are translationally repressed. Essential for female fertility and oocyte-to-embryo transition by coordinating maternal mRNA storage, translation and degradation. The protein is Zygote arrest protein 1 of Homo sapiens (Human).